Reading from the N-terminus, the 350-residue chain is Small ribosomal subunit biogenesis GTPase RsgA (350 aa).

The span at 1–17 (MSKNKLSKGQQRRVNAN) shows a compositional bias: polar residues. The interval 1–27 (MSKNKLSKGQQRRVNANHQRRLKTSAE) is disordered. Residues 104 to 273 (TSVLTRPDFY…VIDSPGVREF (170 aa)) form the CP-type G domain. Residues 160 to 163 (NKID) and 214 to 222 (GQSGVGKSS) contribute to the GTP site. Cysteine 297, cysteine 302, histidine 304, and cysteine 310 together coordinate Zn(2+).

The protein belongs to the TRAFAC class YlqF/YawG GTPase family. RsgA subfamily. Monomer. Associates with 30S ribosomal subunit, binds 16S rRNA. Requires Zn(2+) as cofactor.

It localises to the cytoplasm. Functionally, one of several proteins that assist in the late maturation steps of the functional core of the 30S ribosomal subunit. Helps release RbfA from mature subunits. May play a role in the assembly of ribosomal proteins into the subunit. Circularly permuted GTPase that catalyzes slow GTP hydrolysis, GTPase activity is stimulated by the 30S ribosomal subunit. The chain is Small ribosomal subunit biogenesis GTPase RsgA from Salmonella agona (strain SL483).